A 445-amino-acid polypeptide reads, in one-letter code: UDP-N-acetylmuramoylalanine--D-glutamate ligase (445 aa).

Gly-110 to Thr-116 is a binding site for ATP.

It belongs to the MurCDEF family.

It is found in the cytoplasm. The enzyme catalyses UDP-N-acetyl-alpha-D-muramoyl-L-alanine + D-glutamate + ATP = UDP-N-acetyl-alpha-D-muramoyl-L-alanyl-D-glutamate + ADP + phosphate + H(+). Its pathway is cell wall biogenesis; peptidoglycan biosynthesis. In terms of biological role, cell wall formation. Catalyzes the addition of glutamate to the nucleotide precursor UDP-N-acetylmuramoyl-L-alanine (UMA). This chain is UDP-N-acetylmuramoylalanine--D-glutamate ligase, found in Christiangramia forsetii (strain DSM 17595 / CGMCC 1.15422 / KT0803) (Gramella forsetii).